Reading from the N-terminus, the 687-residue chain is Putative secreted metallopeptidase (687 aa).

The first 22 residues, Met1–Ala22, serve as a signal peptide directing secretion. N-linked (GlcNAc...) asparagine glycans are attached at residues Asn54, Asn114, Asn252, Asn256, and Asn379.

It belongs to the peptidase M10B family.

It is found in the secreted. In Arthroderma benhamiae (strain ATCC MYA-4681 / CBS 112371) (Trichophyton mentagrophytes), this protein is Putative secreted metallopeptidase.